Reading from the N-terminus, the 553-residue chain is MNIIDQVKQTLVEEIAASINKAGLADEIPDIKIEVPKDTKNGDYATNIAMVLTKIAKRNPREIAQAIVDNLDTEKAHVKQIDIAGPGFINFYLDNQYLTAIIPEAIEKGDQFGHVNESKGQNVLLEYVSANPTGDLHIGHARNAAVGDALANILTAAGYNVTREYYINDAGNQITNLARSIETHFFEALGDNSYSMPEDGYNGKDIIEIGKDLAEKHPEIKDYSEEARLKEFRKLGVEYEMAKLKNDLAEFNTHFDNWFSETSLYEKGEILEVLAKMKELGYTYEADGATWLRTTDFKDDKDRVLIKNDGTYTYFLPDIAYHFDKVKRGNDILIDLFGADHHGYINRLKASLETFGVDSNRLEIQIMQMVRLMENGKEVKMSKRTGNAITLREIMDEVGVDAARYFLTMRSPDSHFDFDMELAKEQSQDNPVYYAQYAHARICSILKQAKEQGIEVTAANDFTTITNEKAIELLKKVADFEPTIESAAEHRSAHRITNYIQDLAAHFHKFYNAEKVLTDDIEKTKAHVAMIEAVRITLKNALAMVGVSAPESM.

The 'HIGH' region motif lies at 132–140 (PTGDLHIGH).

It belongs to the class-I aminoacyl-tRNA synthetase family. As to quaternary structure, monomer.

The protein localises to the cytoplasm. The catalysed reaction is tRNA(Arg) + L-arginine + ATP = L-arginyl-tRNA(Arg) + AMP + diphosphate. The sequence is that of Arginine--tRNA ligase from Staphylococcus aureus (strain Mu50 / ATCC 700699).